A 1465-amino-acid chain; its full sequence is Gag-Pol polyprotein (1465 aa).

Glycine 2 carries the N-myristoyl glycine; by host lipid modification. The Nuclear export signal signature appears at 16–22; sequence FEHIRLR. The Nuclear localization signal signature appears at 26 to 32; sequence KKKYQIK. The interval 116–144 is disordered; sequence NAERNTTETSSGQKKNDKGVTVPPGGSQN. 2 CCHC-type zinc fingers span residues 402 to 419 and 423 to 440; these read VKCY…QCPE and MRCL…DCRG. Residues 532 to 603 form the Peptidase A2 domain; it reads IRALLDTGAD…TPINIIGRNI (72 aa). Aspartate 537 (for protease activity; shared with dimeric partner) is an active-site residue. The 191-residue stretch at 659–849 folds into the Reverse transcriptase domain; it reads EGKISKIGGE…PPYEWMGYKL (191 aa). 3 residues coordinate Mg(2+): aspartate 725, aspartate 800, and aspartate 801. An RT 'primer grip' region spans residues 842-850; it reads YEWMGYKLW. A Tryptophan repeat motif motif is present at residues 1012–1028; that stretch reads WEQWWADYWQVSWIPDW. The RNase H type-1 domain occupies 1048–1171; sequence IPKEDVYYVD…IDKLVSQGMR (124 aa). Mg(2+) is bound by residues aspartate 1057, glutamate 1092, aspartate 1112, and aspartate 1163. The segment at 1177–1218 adopts an Integrase-type zinc-finger fold; the sequence is EKIEEAQEEHERYHNNWRNLADTYGLPQIVAKEIVAMCPKCQ. The Zn(2+) site is built by histidine 1186, histidine 1190, cysteine 1214, and cysteine 1217. Residues 1228–1378 form the Integrase catalytic domain; that stretch reads VDASPGVWQM…TPAERLINMI (151 aa). Residues aspartate 1238 and aspartate 1290 each contribute to the Mg(2+) site. The integrase-type DNA-binding region spans 1397-1444; sequence FRVYYREGRDPVWKGPGQLIWKGEGAVVIKGGVELKEYPRRKAKIIKD.

Homotrimer. Interacts with gp41 (via C-terminus). In terms of assembly, homodimer. The active site consists of two apposed aspartic acid residues. As to quaternary structure, heterodimer of p66 RT and p51 RT (RT p66/p51). Heterodimerization of RT is essential for DNA polymerase activity. Despite the sequence identities, p66 RT and p51 RT have distinct folding. Homotetramer; may further associate as a homohexadecamer. It depends on Mg(2+) as a cofactor. Post-translationally, specific enzymatic cleavages by the viral protease yield mature proteins. The protease is released by autocatalytic cleavage. The polyprotein is cleaved during and after budding, this process is termed maturation. Proteolytic cleavage of p66 RT removes the RNase H domain to yield the p51 RT subunit. In terms of processing, capsid protein p24 is phosphorylated.

The protein resides in the virion. It is found in the host nucleus. The protein localises to the host cytoplasm. Its subcellular location is the host cell membrane. It catalyses the reaction Specific for a P1 residue that is hydrophobic, and P1' variable, but often Pro.. The catalysed reaction is Endohydrolysis of RNA in RNA/DNA hybrids. Three different cleavage modes: 1. sequence-specific internal cleavage of RNA. Human immunodeficiency virus type 1 and Moloney murine leukemia virus enzymes prefer to cleave the RNA strand one nucleotide away from the RNA-DNA junction. 2. RNA 5'-end directed cleavage 13-19 nucleotides from the RNA end. 3. DNA 3'-end directed cleavage 15-20 nucleotides away from the primer terminus.. It carries out the reaction 3'-end directed exonucleolytic cleavage of viral RNA-DNA hybrid.. The enzyme catalyses DNA(n) + a 2'-deoxyribonucleoside 5'-triphosphate = DNA(n+1) + diphosphate. With respect to regulation, the viral protease is inhibited by many synthetic protease inhibitors (PIs), such as amprenavir, atazanavir, indinavir, loprinavir, nelfinavir, ritonavir and saquinavir. RT can be inhibited either by nucleoside RT inhibitors (NRTIs) or by non nucleoside RT inhibitors (NNRTIs). NRTIs act as chain terminators, whereas NNRTIs inhibit DNA polymerization by binding a small hydrophobic pocket near the RT active site and inducing an allosteric change in this region. Classical NRTIs are abacavir, adefovir (PMEA), didanosine (ddI), lamivudine (3TC), stavudine (d4T), tenofovir (PMPA), zalcitabine (ddC), and zidovudine (AZT). Classical NNRTIs are atevirdine (BHAP U-87201E), delavirdine, efavirenz (DMP-266), emivirine (I-EBU), and nevirapine (BI-RG-587). The tritherapies used as a basic effective treatment of AIDS associate two NRTIs and one NNRTI. Use of protease inhibitors in tritherapy regimens permit more ambitious therapeutic strategies. In terms of biological role, gag-Pol polyprotein and Gag polyprotein may regulate their own translation, by the binding genomic RNA in the 5'-UTR. At low concentration, Gag-Pol and Gag would promote translation, whereas at high concentration, the polyproteins encapsidate genomic RNA and then shut off translation. Matrix protein p17 has two main functions: in infected cell, it targets Gag and Gag-pol polyproteins to the plasma membrane via a multipartite membrane-binding signal, that includes its myristointegration complex. The myristoylation signal and the NLS exert conflicting influences its subcellular localization. The key regulation of these motifs might be phosphorylation of a portion of MA molecules on the C-terminal tyrosine at the time of virus maturation, by virion-associated cellular tyrosine kinase. Implicated in the release from host cell mediated by Vpu. Its function is as follows. Capsid protein p24 forms the conical core that encapsulates the genomic RNA-nucleocapsid complex in the virion. The core is constituted by capsid protein hexamer subunits. The core is disassembled soon after virion entry. Interaction with host PPIA/CYPA protects the virus from restriction by host TRIM5-alpha and from an unknown antiviral activity in host cells. This capsid restriction by TRIM5 is one of the factors which restricts SIV to the simian species. Functionally, nucleocapsid protein p7 encapsulates and protects viral dimeric unspliced (genomic) RNA. Binds these RNAs through its zinc fingers. Facilitates rearangement of nucleic acid secondary structure during retrotranscription of genomic RNA. This capability is referred to as nucleic acid chaperone activity. In terms of biological role, the aspartyl protease mediates proteolytic cleavages of Gag and Gag-Pol polyproteins during or shortly after the release of the virion from the plasma membrane. Cleavages take place as an ordered, step-wise cascade to yield mature proteins. This process is called maturation. Displays maximal activity during the budding process just prior to particle release from the cell. Also cleaves Nef and Vif, probably concomitantly with viral structural proteins on maturation of virus particles. Hydrolyzes host EIF4GI and PABP1 in order to shut off the capped cellular mRNA translation. The resulting inhibition of cellular protein synthesis serves to ensure maximal viral gene expression and to evade host immune response. Reverse transcriptase/ribonuclease H (RT) is a multifunctional enzyme that converts the viral dimeric RNA genome into dsDNA in the cytoplasm, shortly after virus entry into the cell. This enzyme displays a DNA polymerase activity that can copy either DNA or RNA templates, and a ribonuclease H (RNase H) activity that cleaves the RNA strand of RNA-DNA heteroduplexes in a partially processive 3' to 5' endonucleasic mode. Conversion of viral genomic RNA into dsDNA requires many steps. A tRNA binds to the primer-binding site (PBS) situated at the 5'-end of the viral RNA. RT uses the 3' end of the tRNA primer to perform a short round of RNA-dependent minus-strand DNA synthesis. The reading proceeds through the U5 region and ends after the repeated (R) region which is present at both ends of viral RNA. The portion of the RNA-DNA heteroduplex is digested by the RNase H, resulting in a ssDNA product attached to the tRNA primer. This ssDNA/tRNA hybridizes with the identical R region situated at the 3' end of viral RNA. This template exchange, known as minus-strand DNA strong stop transfer, can be either intra- or intermolecular. RT uses the 3' end of this newly synthesized short ssDNA to perform the RNA-dependent minus-strand DNA synthesis of the whole template. RNase H digests the RNA template except for two polypurine tracts (PPTs) situated at the 5'-end and near the center of the genome. It is not clear if both polymerase and RNase H activities are simultaneous. RNase H can probably proceed both in a polymerase-dependent (RNA cut into small fragments by the same RT performing DNA synthesis) and a polymerase-independent mode (cleavage of remaining RNA fragments by free RTs). Secondly, RT performs DNA-directed plus-strand DNA synthesis using the PPTs that have not been removed by RNase H as primers. PPTs and tRNA primers are then removed by RNase H. The 3' and 5' ssDNA PBS regions hybridize to form a circular dsDNA intermediate. Strand displacement synthesis by RT to the PBS and PPT ends produces a blunt ended, linear dsDNA copy of the viral genome that includes long terminal repeats (LTRs) at both ends. Its function is as follows. Integrase catalyzes viral DNA integration into the host chromosome, by performing a series of DNA cutting and joining reactions. This enzyme activity takes place after virion entry into a cell and reverse transcription of the RNA genome in dsDNA. The first step in the integration process is 3' processing. This step requires a complex comprising the viral genome, matrix protein, Vpr and integrase. This complex is called the pre-integration complex (PIC). The integrase protein removes 2 nucleotides from each 3' end of the viral DNA, leaving recessed CA OH's at the 3' ends. In the second step, the PIC enters cell nucleus. This process is mediated through integrase and Vpr proteins, and allows the virus to infect a non dividing cell. This ability to enter the nucleus is specific of lentiviruses, other retroviruses cannot and rely on cell division to access cell chromosomes. In the third step, termed strand transfer, the integrase protein joins the previously processed 3' ends to the 5' ends of strands of target cellular DNA at the site of integration. The 5'-ends are produced by integrase-catalyzed staggered cuts, 5 bp apart. A Y-shaped, gapped, recombination intermediate results, with the 5'-ends of the viral DNA strands and the 3' ends of target DNA strands remaining unjoined, flanking a gap of 5 bp. The last step is viral DNA integration into host chromosome. This involves host DNA repair synthesis in which the 5 bp gaps between the unjoined strands are filled in and then ligated. Since this process occurs at both cuts flanking the SIV genome, a 5 bp duplication of host DNA is produced at the ends of SIV integration. Alternatively, Integrase may catalyze the excision of viral DNA just after strand transfer, this is termed disintegration. This chain is Gag-Pol polyprotein (gag-pol), found in Cercopithecidae (Old World monkeys).